The primary structure comprises 1193 residues: Laminin subunit gamma-2 (1193 aa).

The N-terminal stretch at methionine 1 to alanine 21 is a signal peptide. Cystine bridges form between cysteine 28–cysteine 37, cysteine 30–cysteine 53, cysteine 56–cysteine 65, cysteine 68–cysteine 81, cysteine 84–cysteine 96, cysteine 86–cysteine 102, cysteine 104–cysteine 113, cysteine 116–cysteine 128, cysteine 139–cysteine 150, cysteine 141–cysteine 155, cysteine 157–cysteine 166, and cysteine 169–cysteine 184. Laminin EGF-like domains lie at cysteine 28 to proline 83, cysteine 84 to glutamine 130, and cysteine 139 to glutamine 186. The 10-residue stretch at cysteine 187–cysteine 196 folds into the Laminin EGF-like 4; first part domain. The 169-residue stretch at glutamine 213–glutamine 381 folds into the Laminin IV type A domain. Residues asparagine 342 and asparagine 362 are each glycosylated (N-linked (GlcNAc...) asparagine). The region spanning cysteine 382–proline 415 is the Laminin EGF-like 4; second part domain. 3 consecutive Laminin EGF-like domains span residues cysteine 416–proline 461, cysteine 462–proline 516, and cysteine 517–alanine 572. 11 disulfides stabilise this stretch: cysteine 462–cysteine 470, cysteine 464–cysteine 481, cysteine 484–cysteine 493, cysteine 496–cysteine 514, cysteine 517–cysteine 531, cysteine 519–cysteine 538, cysteine 541–cysteine 550, cysteine 553–cysteine 570, cysteine 573–cysteine 585, cysteine 575–cysteine 591, and cysteine 593–cysteine 602. Residues cysteine 573 to cysteine 602 enclose the Laminin EGF-like 8; truncated domain. Positions glutamate 603–glutamine 1193 are domain II and I. The stretch at alanine 611–aspartate 718 forms a coiled coil. Serine 803 and serine 805 each carry an O-linked (Xyl...) (chondroitin sulfate) serine glycan. Coiled-coil stretches lie at residues alanine 811–methionine 1076 and glutamate 1117–glutamine 1193. N-linked (GlcNAc...) asparagine glycans are attached at residues asparagine 942 and asparagine 1033.

In terms of assembly, laminin is a complex glycoprotein, consisting of three different polypeptide chains (alpha, beta, gamma), which are bound to each other by disulfide bonds into a cross-shaped molecule comprising one long and three short arms with globules at each end. Gamma-2 is a subunit of laminin-5 (laminin-332 or epiligrin/kalinin/nicein). Post-translationally, O-glycosylated; contains chondroitin sulfate (CS). CS attachment is on either Ser-803 or Ser-805. In terms of tissue distribution, the large variant is expressed only in specific epithelial cells of embryonic and neonatal tissues. In 17-week old embryo the small variant is found in cerebral cortex, lung, and distal tubes of kidney, but not in epithelia except for distal tubuli.

It localises to the secreted. It is found in the extracellular space. The protein resides in the extracellular matrix. The protein localises to the basement membrane. Functionally, binding to cells via a high affinity receptor, laminin is thought to mediate the attachment, migration and organization of cells into tissues during embryonic development by interacting with other extracellular matrix components. Ladsin exerts cell-scattering activity toward a wide variety of cells, including epithelial, endothelial, and fibroblastic cells. The chain is Laminin subunit gamma-2 (LAMC2) from Homo sapiens (Human).